The sequence spans 79 residues: TALLLAMHYTADTSLAFTSVAHTCRNVQFGWLIRNLHANGASMFFICIYLHIGRGFYYGSYLNKETWNIGVILLLTLMA.

The next 3 membrane-spanning stretches (helical) occupy residues 1–7, 31–52, and 67–79; these read TALLLAM, WLIRNLHANGASMFFICIYLHI, and WNIGVILLLTLMA. Residues His37 and His51 each coordinate heme b.

It belongs to the cytochrome b family. The cytochrome bc1 complex contains 11 subunits: 3 respiratory subunits (MT-CYB, CYC1 and UQCRFS1), 2 core proteins (UQCRC1 and UQCRC2) and 6 low-molecular weight proteins (UQCRH/QCR6, UQCRB/QCR7, UQCRQ/QCR8, UQCR10/QCR9, UQCR11/QCR10 and a cleavage product of UQCRFS1). This cytochrome bc1 complex then forms a dimer. Requires heme b as cofactor.

The protein resides in the mitochondrion inner membrane. Functionally, component of the ubiquinol-cytochrome c reductase complex (complex III or cytochrome b-c1 complex) that is part of the mitochondrial respiratory chain. The b-c1 complex mediates electron transfer from ubiquinol to cytochrome c. Contributes to the generation of a proton gradient across the mitochondrial membrane that is then used for ATP synthesis. In Corcorax melanoramphos (White-winged chough), this protein is Cytochrome b (MT-CYB).